Consider the following 632-residue polypeptide: 1-deoxy-D-xylulose-5-phosphate synthase (632 aa).

Thiamine diphosphate contacts are provided by residues His-87 and 128-130; that span reads GHS. Asp-159 contacts Mg(2+). Thiamine diphosphate-binding positions include 160–161, Asn-188, Phe-295, and Glu-378; that span reads GA. Residue Asn-188 coordinates Mg(2+).

Belongs to the transketolase family. DXPS subfamily. As to quaternary structure, homodimer. It depends on Mg(2+) as a cofactor. The cofactor is thiamine diphosphate.

The catalysed reaction is D-glyceraldehyde 3-phosphate + pyruvate + H(+) = 1-deoxy-D-xylulose 5-phosphate + CO2. The protein operates within metabolic intermediate biosynthesis; 1-deoxy-D-xylulose 5-phosphate biosynthesis; 1-deoxy-D-xylulose 5-phosphate from D-glyceraldehyde 3-phosphate and pyruvate: step 1/1. In terms of biological role, catalyzes the acyloin condensation reaction between C atoms 2 and 3 of pyruvate and glyceraldehyde 3-phosphate to yield 1-deoxy-D-xylulose-5-phosphate (DXP). This is 1-deoxy-D-xylulose-5-phosphate synthase from Pseudomonas fluorescens (strain SBW25).